The sequence spans 92 residues: Small ribosomal subunit protein uS19 (92 aa).

This sequence belongs to the universal ribosomal protein uS19 family.

Protein S19 forms a complex with S13 that binds strongly to the 16S ribosomal RNA. The chain is Small ribosomal subunit protein uS19 from Bacillus mycoides (strain KBAB4) (Bacillus weihenstephanensis).